We begin with the raw amino-acid sequence, 206 residues long: Adenine phosphoribosyltransferase (206 aa).

This sequence belongs to the purine/pyrimidine phosphoribosyltransferase family. Homodimer.

The protein resides in the cytoplasm. It carries out the reaction AMP + diphosphate = 5-phospho-alpha-D-ribose 1-diphosphate + adenine. It functions in the pathway purine metabolism; AMP biosynthesis via salvage pathway; AMP from adenine: step 1/1. Catalyzes a salvage reaction resulting in the formation of AMP, that is energically less costly than de novo synthesis. This Burkholderia mallei (strain NCTC 10229) protein is Adenine phosphoribosyltransferase.